The chain runs to 458 residues: Cysteine--tRNA ligase (458 aa).

Zn(2+) is bound at residue Cys27. The 'HIGH' region signature appears at 29–39; that stretch reads ITPQSEPHIGH. Zn(2+) is bound by residues Cys207, His232, and Glu236. Residues 265–269 carry the 'KMSKS' region motif; that stretch reads KMSKS. Lys268 provides a ligand contact to ATP.

The protein belongs to the class-I aminoacyl-tRNA synthetase family. As to quaternary structure, monomer. The cofactor is Zn(2+).

The protein resides in the cytoplasm. It carries out the reaction tRNA(Cys) + L-cysteine + ATP = L-cysteinyl-tRNA(Cys) + AMP + diphosphate. This Dehalococcoides mccartyi (strain ATCC BAA-2266 / KCTC 15142 / 195) (Dehalococcoides ethenogenes (strain 195)) protein is Cysteine--tRNA ligase.